The following is a 334-amino-acid chain: 4-hydroxyproline 2-epimerase (334 aa).

Residue Cys90 is the Proton acceptor of the active site. Substrate contacts are provided by residues Gly91–His92, His223, and Asp249. The Proton donor role is filled by Cys253. Gly254 to Thr255 contributes to the substrate binding site.

Belongs to the proline racemase family. Homodimer.

The enzyme catalyses trans-4-hydroxy-L-proline = cis-4-hydroxy-D-proline. Catalyzes the epimerization of trans-4-hydroxy-L-proline (t4LHyp) to cis-4-hydroxy-D-proline (c4DHyp). Is likely involved in a degradation pathway that converts t4LHyp to alpha-ketoglutarate, which would allow P.denitrificans to grow on t4LHyp as a sole carbon source. Also seems to be involved in an alternative catabolic pathway that degrades trans-4-hydroxy-L-proline betaine (tHyp-B) to alpha-ketoglutarate; this pathway would permit the utilization of tHyp-B as a sole carbon and nitrogen source. This Paracoccus denitrificans (strain Pd 1222) protein is 4-hydroxyproline 2-epimerase (hypF).